The following is a 321-amino-acid chain: MKRSGPFFHDVSQENLYLKSELSRCHKLISELEASYFHQKNNKLLKENTDMKEKLQQLSAELTHMSTKEKHASHTSQTLHQIRAELLDKIVVLQELLSAETYKRRAEIEEKHKLHIAKVKIEEENKNLHKRISELQASIEQEQNALLQAKQQAELIKAENGRLKEQMVEKEYQLKHIKIEVDHMKDRIIETKERLLDIEKTKEKLFHETIISYKRQLDESDAWIASHFADIDGGTKQKEKTEEEAPAAYAQPNHVETILEDVTKQIHVLQKQLAHAQSSDQAKSHTIEELKNRAAEEKPYQKWVYKLNLEKENKPSQKKPQ.

Coiled-coil stretches lie at residues 37-70 and 108-205; these read FHQK…TKEK and IEEK…KEKL. Composition is skewed to basic and acidic residues over residues 234–243 and 282–293; these read GTKQKEKTEE and AKSHTIEELKNR. 2 disordered regions span residues 234–253 and 274–293; these read GTKQ…AQPN and AHAQ…LKNR.

The sequence is that of Sporulation protein cse15 (cse15) from Bacillus subtilis (strain 168).